Reading from the N-terminus, the 256-residue chain is Alcohol dehydrogenase (256 aa).

The residue at position 2 (S2) is an N-acetylserine. Residues F12–I41 and D65 contribute to the NAD(+) site. A substrate-binding site is contributed by S140. The active-site Proton acceptor is Y153. An NAD(+)-binding site is contributed by K157.

Belongs to the short-chain dehydrogenases/reductases (SDR) family. Homodimer.

It carries out the reaction a primary alcohol + NAD(+) = an aldehyde + NADH + H(+). The enzyme catalyses a secondary alcohol + NAD(+) = a ketone + NADH + H(+). Its activity is regulated as follows. Inhibited by 2,2,2-trifluoroethanol and pyrazole. This chain is Alcohol dehydrogenase (Adh), found in Drosophila melanogaster (Fruit fly).